A 419-amino-acid chain; its full sequence is Glucose-1-phosphate adenylyltransferase (419 aa).

Alpha-D-glucose 1-phosphate-binding positions include Y106, G171, 186–187 (EK), and S204.

The protein belongs to the bacterial/plant glucose-1-phosphate adenylyltransferase family. As to quaternary structure, homotetramer.

The catalysed reaction is alpha-D-glucose 1-phosphate + ATP + H(+) = ADP-alpha-D-glucose + diphosphate. It functions in the pathway glycan biosynthesis; glycogen biosynthesis. Involved in the biosynthesis of ADP-glucose, a building block required for the elongation reactions to produce glycogen. Catalyzes the reaction between ATP and alpha-D-glucose 1-phosphate (G1P) to produce pyrophosphate and ADP-Glc. The polypeptide is Glucose-1-phosphate adenylyltransferase (Roseobacter denitrificans (strain ATCC 33942 / OCh 114) (Erythrobacter sp. (strain OCh 114))).